We begin with the raw amino-acid sequence, 332 residues long: Glycerol-3-phosphate dehydrogenase [NAD(P)+] (332 aa).

NADPH contacts are provided by serine 11, phenylalanine 12, lysine 32, and lysine 106. Sn-glycerol 3-phosphate is bound by residues lysine 106, glycine 137, and serine 139. Residue alanine 141 coordinates NADPH. The sn-glycerol 3-phosphate site is built by lysine 192, aspartate 245, serine 255, arginine 256, and asparagine 257. Lysine 192 (proton acceptor) is an active-site residue. Arginine 256 is a binding site for NADPH. The NADPH site is built by valine 280 and glutamate 282.

Belongs to the NAD-dependent glycerol-3-phosphate dehydrogenase family.

The protein resides in the cytoplasm. It carries out the reaction sn-glycerol 3-phosphate + NAD(+) = dihydroxyacetone phosphate + NADH + H(+). It catalyses the reaction sn-glycerol 3-phosphate + NADP(+) = dihydroxyacetone phosphate + NADPH + H(+). Its pathway is membrane lipid metabolism; glycerophospholipid metabolism. In terms of biological role, catalyzes the reduction of the glycolytic intermediate dihydroxyacetone phosphate (DHAP) to sn-glycerol 3-phosphate (G3P), the key precursor for phospholipid synthesis. In Staphylococcus aureus (strain USA300), this protein is Glycerol-3-phosphate dehydrogenase [NAD(P)+].